The primary structure comprises 90 residues: Small ribosomal subunit protein bS20 (90 aa).

Belongs to the bacterial ribosomal protein bS20 family.

Functionally, binds directly to 16S ribosomal RNA. In Rickettsia felis (strain ATCC VR-1525 / URRWXCal2) (Rickettsia azadi), this protein is Small ribosomal subunit protein bS20.